Reading from the N-terminus, the 260-residue chain is Transcription factor SUM-1 (260 aa).

A bHLH domain is found at 112–163; it reads DKRKAATLRERRRLRKVNEAFEALKRHTCANPNQRLPKVEILRNAIEYIEKL. A disordered region spans residues 171 to 208; the sequence is KANGDSEMDSAETSSNTSDAMTDGSSPGSYSSDKAQQY. Residues 181–205 show a composition bias toward polar residues; sequence AETSSNTSDAMTDGSSPGSYSSDKA.

In terms of assembly, efficient DNA binding requires dimerization with another bHLH protein. Homodimer, and heterodimer with the ubiquitous bHLH protein E12.

It is found in the nucleus. Regulatory factor during embryogenesis. Conversion of pluripotent secondary mesenchyme cells to myogenic cells. It binds to the MCK enhancer element. In Lytechinus variegatus (Green sea urchin), this protein is Transcription factor SUM-1 (SUM-1).